We begin with the raw amino-acid sequence, 323 residues long: D-alanine--D-alanine ligase (323 aa).

Positions 105 to 305 (KQQLVPRGIP…YEDLVEAIVE (201 aa)) constitute an ATP-grasp domain. 131–188 (PLARPYVLKPVNEGSSVGVAIVTDESNYGNPIRRDAPGPWQEFRELLAEPFIRGRELT) is an ATP binding site. 3 residues coordinate Mg(2+): aspartate 256, glutamate 272, and asparagine 274.

It belongs to the D-alanine--D-alanine ligase family. The cofactor is Mg(2+). Mn(2+) serves as cofactor.

The protein localises to the cytoplasm. The catalysed reaction is 2 D-alanine + ATP = D-alanyl-D-alanine + ADP + phosphate + H(+). Its pathway is cell wall biogenesis; peptidoglycan biosynthesis. Its function is as follows. Cell wall formation. This is D-alanine--D-alanine ligase from Erythrobacter litoralis (strain HTCC2594).